The primary structure comprises 1468 residues: MSELFKKLMDQIEMPLEIKNSSVFSSADIIEVKVHSLSRLWEFHFSFPELLPIEVYRELQTRLVNSFEKADIKATFDIRAETIDFSDDLLQDYYQQAFCEPLCNSASFKSSFSQLKVHYNGSQMIISAPQFVNNNHFRQNHLPRLEQQFSLFGFGKLAIDMVSDEQMTQDLKSSFETNREQLLEKANQEAMQALEAQKSLEDSAPPSEEVTPTQNYDFKERIKQRQAGFEKAEITPMIEVTTEENRIVFEGMVFSVERKTTRTGRHIINFKMTDYTSSFAMQKWAKDDEELKKYDMISKGSWLRVRGNIENNNFTKSLTMNVQDIKEIVHHERKDLMPADQKRVEFHAHTNMSTMDALPTVESLIDTAAKWGHPAIAITDHANVQSFPHGYHRAKKAGIKAIFGLEANIVEDKVPISYNEVDMNLHEATYVVFDVETTGLSAANNDLIQIAASKMFKGNIIEQFDEFIDPGHPLSAFTTELTGITDNHVRGSKPILQVLQEFQNFCQGTVLVAHNATFDVGFMNANYERHNLPLITQPVIDTLEFARNLYPEYKRHGLGPLTKRFQVALEHHHMANYDAEATGRLLFIFLKEARENRDVTNLMELNTKLVAEDSYKKARIKHATIYVQNQVGLKNIFKLVSLSNVKYFEGVARIPRSVLDAHREGLLLGTACSDGEVFDALLSNGIDAAVTLAKYYDFIEVMPPAIYRPLVVRDLIKDEVGIQQIIRDLIEVGRRLDKPVLATGNVHYIEPEDEIYREIIVRSLGQGAMINRTIGRGEDAQPAPLPKAHFRTTNEMLDEFAFLGKDLAYEIVVTNTNTFADRFEDVEVVKGDLYTPFVDRAEERVAELTYAKAFEIYGNPLPDIIDLRIEKELASILGNGFAVIYLASQMLVQRSNERGYLVGSRGSVGSSFVATMIGITEVNPMPPHYVCPNCQHSEFITDGSCGSGYDLPNKNCPKCGTLYKKDGQDIPFETFLGFDGDKVPDIDLNFSGDDQPSAHLDVRDIFGEEYAFRAGTVGTVAEKTAFGFVKGYERDYNKFYNDAEVERLATGAAGVKRSTGQHPGGIVVIPNYMDVYDFTPVQYPADDMTAAWQTTHFNFHDIDENVLKLDILGHDDPTMIRKLQDLSGIDPSNILPDDPDVMKLFSGTEVLGVTEEQIGTPTGMLGIPEFGTNFVRGMVNETHPTTFAELLQLSGLSHGTDVWLGNAQDLIKEGIATLSTVIGCRDDIMVYLMHAGLQPKMAFTIMERVRKGLWLKISEDERNGYIQAMRDNNVPDWYIESCGKIKYMFPKAHAAAYVLMALRVAYFKVHYPIFYYCAYFSIRAKAFELRTMSAGLDAVKARMKDITEKRQRNEATNVENDLFTTLELVNEMLERGFKFGKLDLYRSHATDFIIEEDTLIPPFVAMEGLGENVAKQIVRAREDGEFLSKTELRKRGGVSSTLVEKFDEMGILGNLPEDNQLSLFDDFF.

The disordered stretch occupies residues 197–217; the sequence is QKSLEDSAPPSEEVTPTQNYD. Residues 430 to 586 enclose the Exonuclease domain; it reads YVVFDVETTG…YDAEATGRLL (157 aa).

Belongs to the DNA polymerase type-C family. PolC subfamily.

It is found in the cytoplasm. The enzyme catalyses DNA(n) + a 2'-deoxyribonucleoside 5'-triphosphate = DNA(n+1) + diphosphate. Required for replicative DNA synthesis. This DNA polymerase also exhibits 3' to 5' exonuclease activity. The chain is DNA polymerase III PolC-type from Streptococcus agalactiae serotype III (strain NEM316).